A 279-amino-acid polypeptide reads, in one-letter code: Threonylcarbamoyl-AMP synthase (279 aa).

Residues 1–55 constitute a mitochondrion transit peptide; sequence MSPARRCRGMRAAVAASVGLSEGPAGSRSGRLFRPPSPAPAAPGARLLRLPGSGA. The disordered stretch occupies residues 21–41; that stretch reads SEGPAGSRSGRLFRPPSPAPA. A Phosphoserine modification is found at Ser60. In terms of domain architecture, YrdC-like spans 67 to 257; the sequence is TEALRAAVAE…KFGIIRPGCA (191 aa).

It belongs to the SUA5 family. As to quaternary structure, interacts with RSC1A1. As to expression, ubiquitously expressed.

It is found in the cytoplasm. The protein localises to the mitochondrion. It localises to the cell membrane. It catalyses the reaction L-threonine + hydrogencarbonate + ATP = L-threonylcarbamoyladenylate + diphosphate + H2O. Functionally, cytoplasmic and mitochondrial threonylcarbamoyl-AMP synthase required for the formation of a threonylcarbamoyl group on adenosine at position 37 (t(6)A37) in tRNAs that read codons beginning with adenine. Catalyzes the conversion of L-threonine, HCO(3)(-)/CO(2) and ATP to give threonylcarbamoyl-AMP (TC-AMP) as the acyladenylate intermediate, with the release of diphosphate. Participates in t(6)A37 formation in cytoplasmic and mitochondrial tRNAs. May regulate the activity of some transporters. This chain is Threonylcarbamoyl-AMP synthase, found in Homo sapiens (Human).